A 135-amino-acid polypeptide reads, in one-letter code: Large ribosomal subunit protein uL16c (135 aa).

Belongs to the universal ribosomal protein uL16 family. In terms of assembly, part of the 50S ribosomal subunit.

It localises to the plastid. The protein resides in the chloroplast. The sequence is that of Large ribosomal subunit protein uL16c from Vitis vinifera (Grape).